The sequence spans 67 residues: MLSLDFNNELIKAAPIVGTGVADVSARLFFGLSLNEWFYVAAIAYTVVQIGAKVVDKMIDWKKANKE.

Residues 1 to 36 (MLSLDFNNELIKAAPIVGTGVADVSARLFFGLSLNE) lie on the Cytoplasmic side of the membrane. A helical; Signal-anchor for type II membrane protein membrane pass occupies residues 37–55 (WFYVAAIAYTVVQIGAKVV). Residues 56–67 (DKMIDWKKANKE) are Periplasmic-facing.

The protein belongs to the T7likevirus holin family. Homomultimer.

It is found in the host cell inner membrane. Functionally, accumulates harmlessly in the cytoplasmic membrane until it reaches a critical concentration that triggers the formation of micron-scale pores (holes) causing host cell membrane disruption and endolysin escape into the periplasmic space. Participates in determining the precise timing of host cell lysis. Participates with the endolysin and spanin proteins in the sequential events which lead to the programmed host cell lysis releasing the mature viral particles from the host cell. This is Holin from Escherichia phage T7 (Bacteriophage T7).